The following is a 97-amino-acid chain: Protein Vpr (97 aa).

A homooligomerization region spans residues 1–42 (MEQAPENQGPAKEPFNEWALELLEELKAEAVRHFPRPWLHAL). Ser-79, Ser-95, and Ser-97 each carry phosphoserine; by host.

The protein belongs to the HIV-1 VPR protein family. As to quaternary structure, homooligomer, may form homodimer. Interacts with p6-gag region of the Pr55 Gag precursor protein through a (Leu-X-X)4 motif near the C-terminus of the P6gag protein. Interacts with host UNG. May interact with host RAD23A/HHR23A. Interacts with host VPRBP/DCAF1, leading to hijack the CUL4A-RBX1-DDB1-DCAF1/VPRBP complex, mediating ubiquitination of host proteins such as TERT and ZGPAT and arrest of the cell cycle in G2 phase. Phosphorylated on several residues by host. These phosphorylations regulate VPR activity for the nuclear import of the HIV-1 pre-integration complex.

It localises to the virion. The protein resides in the host nucleus. The protein localises to the host extracellular space. Functionally, during virus replication, may deplete host UNG protein, and incude G2-M cell cycle arrest. Acts by targeting specific host proteins for degradation by the 26S proteasome, through association with the cellular CUL4A-DDB1 E3 ligase complex by direct interaction with host VPRPB/DCAF-1. Cell cycle arrest reportedly occurs within hours of infection and is not blocked by antiviral agents, suggesting that it is initiated by the VPR carried into the virion. Additionally, VPR induces apoptosis in a cell cycle dependent manner suggesting that these two effects are mechanistically linked. Detected in the serum and cerebrospinal fluid of AIDS patient, VPR may also induce cell death to bystander cells. In terms of biological role, during virus entry, plays a role in the transport of the viral pre-integration (PIC) complex to the host nucleus. This function is crucial for viral infection of non-dividing macrophages. May act directly at the nuclear pore complex, by binding nucleoporins phenylalanine-glycine (FG)-repeat regions. The sequence is that of Protein Vpr from Human immunodeficiency virus type 1 group O (isolate ANT70) (HIV-1).